Reading from the N-terminus, the 232-residue chain is Fibrillarin-like rRNA/tRNA 2'-O-methyltransferase (232 aa).

Residues 89–90 (TT), 108–109 (EF), 133–134 (DA), and 153–156 (DIAQ) each bind S-adenosyl-L-methionine.

This sequence belongs to the methyltransferase superfamily. Fibrillarin family. As to quaternary structure, interacts with nop5. Component of box C/D small ribonucleoprotein (sRNP) particles that contain rpl7ae, FlpA and nop5, plus a guide RNA.

In terms of biological role, involved in pre-rRNA and tRNA processing. Utilizes the methyl donor S-adenosyl-L-methionine to catalyze the site-specific 2'-hydroxyl methylation of ribose moieties in rRNA and tRNA. Site specificity is provided by a guide RNA that base pairs with the substrate. Methylation occurs at a characteristic distance from the sequence involved in base pairing with the guide RNA. The sequence is that of Fibrillarin-like rRNA/tRNA 2'-O-methyltransferase from Saccharolobus islandicus (strain L.S.2.15 / Lassen #1) (Sulfolobus islandicus).